Reading from the N-terminus, the 300-residue chain is uncharacterized protein (300 aa).

This is an uncharacterized protein from Ictalurid herpesvirus 1 (strain Auburn) (IcHV-1).